The chain runs to 329 residues: Fructose-1,6-bisphosphatase class 1 2 (329 aa).

Residues glutamate 92, aspartate 111, leucine 113, and aspartate 114 each coordinate Mg(2+). Substrate-binding positions include 114–117 (DGSS) and asparagine 206. Mg(2+) is bound at residue glutamate 278.

Belongs to the FBPase class 1 family. As to quaternary structure, homotetramer. The cofactor is Mg(2+).

The protein resides in the cytoplasm. It carries out the reaction beta-D-fructose 1,6-bisphosphate + H2O = beta-D-fructose 6-phosphate + phosphate. It participates in carbohydrate biosynthesis; gluconeogenesis. The chain is Fructose-1,6-bisphosphatase class 1 2 from Xanthobacter autotrophicus (strain ATCC BAA-1158 / Py2).